The following is a 458-amino-acid chain: GTPase Der (458 aa).

EngA-type G domains lie at 4 to 169 (PSIA…PKDL) and 178 to 353 (IMMS…TQHR). GTP contacts are provided by residues 10-17 (GRPNVGKS), 57-61 (DTGGL), 120-123 (NKCE), 184-191 (GRPNVGKS), 231-235 (DTAGI), and 296-299 (NKWD). Positions 354-439 (RRVTTSVVNE…PIILLWRGKQ (86 aa)) constitute a KH-like domain.

It belongs to the TRAFAC class TrmE-Era-EngA-EngB-Septin-like GTPase superfamily. EngA (Der) GTPase family. Associates with the 50S ribosomal subunit.

Functionally, GTPase that plays an essential role in the late steps of ribosome biogenesis. The polypeptide is GTPase Der (Prochlorococcus marinus subsp. pastoris (strain CCMP1986 / NIES-2087 / MED4)).